Reading from the N-terminus, the 215-residue chain is Probable GTP-binding protein EngB (215 aa).

Positions 31–215 (GPPEIAFAGR…RTAILQAVVQ (185 aa)) constitute an EngB-type G domain. GTP contacts are provided by residues 39-46 (GRSNVGKS), 66-70 (GRTQE), 93-96 (DMPG), 160-163 (TKSD), and 194-196 (TSA). Mg(2+)-binding residues include Ser46 and Thr68.

It belongs to the TRAFAC class TrmE-Era-EngA-EngB-Septin-like GTPase superfamily. EngB GTPase family. Mg(2+) is required as a cofactor.

In terms of biological role, necessary for normal cell division and for the maintenance of normal septation. The protein is Probable GTP-binding protein EngB of Bartonella bacilliformis (strain ATCC 35685 / KC583 / Herrer 020/F12,63).